Here is a 230-residue protein sequence, read N- to C-terminus: Response regulator MprA (230 aa).

One can recognise a Response regulatory domain in the interval 4–118; it reads RILVVDDDRA…ELLARMRALL (115 aa). Aspartate 48 carries the post-translational modification 4-aspartylphosphate. Positions 129 to 227 form a DNA-binding region, ompR/PhoB-type; that stretch reads SPALTFLDLT…VRGVGYVLRE (99 aa).

Post-translationally, phosphorylated and dephosphorylated by MprB.

It localises to the cytoplasm. Functionally, member of the two-component regulatory system MprB/MprA which contributes to maintaining a balance among several systems involved in stress resistance and is required for establishment and maintenance of persistent infection in the host. Functions as a transcriptional regulator that recognizes a 19-bp nucleotide motif comprizing two loosely conserved 8-bp direct DNA-binding motif repeats separated by a 3-bp spacer region. This chain is Response regulator MprA (mprA), found in Mycobacterium sp. (strain JLS).